A 547-amino-acid polypeptide reads, in one-letter code: uncharacterized protein (547 aa).

Residues Arg-38 to Glu-50 show a composition bias toward basic and acidic residues. The tract at residues Arg-38–Glu-89 is disordered. Over residues Thr-62–Ser-75 the composition is skewed to low complexity. The next 12 helical transmembrane spans lie at Ile-108 to Phe-128, Leu-148 to Ser-168, Leu-174 to Ser-194, Ile-197 to Ala-217, Gly-233 to Gly-253, Trp-265 to Met-285, Met-346 to Phe-366, Gly-377 to Ile-397, Leu-418 to Thr-438, Trp-445 to Val-465, Ala-478 to Ala-500, and Ser-514 to Gly-534.

Belongs to the major facilitator superfamily. CAR1 family.

The protein localises to the membrane. This is an uncharacterized protein from Schizosaccharomyces pombe (strain 972 / ATCC 24843) (Fission yeast).